A 580-amino-acid polypeptide reads, in one-letter code: Frizzled and smoothened-like protein K (580 aa).

An N-terminal signal peptide occupies residues 1 to 18; the sequence is MRVLFILFLFYFYTYTEA. At 19 to 236 the chain is on the extracellular side; sequence QQYYPIDPTG…QWDNIFDTSD (218 aa). Residues 25-154 enclose the FZ domain; sequence DPTGKCEQYI…SSDYNLTTYG (130 aa). N-linked (GlcNAc...) asparagine glycans are attached at residues Asn52, Asn97, Asn149, Asn170, and Asn186. The helical transmembrane segment at 237 to 257 threads the bilayer; that stretch reads AISLVSLLCSVYLFITYMVIN. At 258-264 the chain is on the cytoplasmic side; the sequence is PKRNKYD. The helical transmembrane segment at 265–285 threads the bilayer; it reads YFFSFFVLSIILMSIAGTIGF. Over 286–308 the chain is Extracellular; it reads SVGGTRKLLCPEINRRGVYTDPA. A helical transmembrane segment spans residues 309 to 329; sequence VAAAGWIFQFAIINAILWFSI. The Cytoplasmic segment spans residues 330 to 349; sequence NSFELWFQIKFIKRKLHLIK. Residues 350–370 form a helical membrane-spanning segment; that stretch reads FYILAVLVISIALSVPLSAIG. Over 371-391 the chain is Extracellular; it reads EFNAGLGNFVVWIESGKYQNW. Residues 392-412 form a helical membrane-spanning segment; it reads FFWGPLGIVLTVGTTFIGLVI. Residues 413-434 lie on the Cytoplasmic side of the membrane; the sequence is WEIYKIVSSTNKSDFFKLQLKP. Residues 435-455 form a helical membrane-spanning segment; the sequence is LMNMLLIYLTFVYLFGYNFYI. At 456–490 the chain is on the extracellular side; sequence HNSLNGFYGSSEEFKNCIISTDGKDCRIQGPPYSS. The helical transmembrane segment at 491-511 threads the bilayer; it reads ILMFVFCLRIYGVYCIALYGF. The Cytoplasmic portion of the chain corresponds to 512–580; that stretch reads SPKTRSIWSN…SMEPDEIILR (69 aa). Residues 514-519 carry the Lys-Thr-X-X-X-Trp motif, mediates interaction with the PDZ domain of Dvl family members motif; that stretch reads KTRSIW. Residues 542 to 580 form a disordered region; sequence TTKGGTSSTDIKMSTNNNSNMDSGGGKSSSMEPDEIILR. Polar residues predominate over residues 551–563; the sequence is DIKMSTNNNSNMD.

Belongs to the G-protein coupled receptor Fz/Smo family.

The protein resides in the membrane. In Dictyostelium discoideum (Social amoeba), this protein is Frizzled and smoothened-like protein K (fslK).